The primary structure comprises 205 residues: MTENQQLTALVAACHWIGEKGWCPATGGNMSVRLDDAQCLITESGKDKGSLQTEDFLLVDIATNHVPSGRTPSAETGLHTLLYRREPTIGAVLHTHSVNATVLSRVEKGAELVLHGYEMQKSLAGQTTHLDRVVIPIFDNDQDIPALAQRVTEFASHTPLRYGFLVRGHGLYCWGATVKEARRHLEGLEFLFQCELQRRLLEAKA.

The Zn(2+) site is built by His94 and His96.

It belongs to the aldolase class II family. MtnB subfamily. Zn(2+) is required as a cofactor.

It carries out the reaction 5-(methylsulfanyl)-D-ribulose 1-phosphate = 5-methylsulfanyl-2,3-dioxopentyl phosphate + H2O. The protein operates within amino-acid biosynthesis; L-methionine biosynthesis via salvage pathway; L-methionine from S-methyl-5-thio-alpha-D-ribose 1-phosphate: step 2/6. Its function is as follows. Catalyzes the dehydration of methylthioribulose-1-phosphate (MTRu-1-P) into 2,3-diketo-5-methylthiopentyl-1-phosphate (DK-MTP-1-P). The polypeptide is Methylthioribulose-1-phosphate dehydratase (Pectobacterium atrosepticum (strain SCRI 1043 / ATCC BAA-672) (Erwinia carotovora subsp. atroseptica)).